Reading from the N-terminus, the 284-residue chain is Efem/EfeO family lipoprotein (284 aa).

Positions M1–A17 are cleaved as a signal peptide. Residue C18 is the site of N-palmitoyl cysteine attachment. C18 carries the S-diacylglycerol cysteine lipid modification.

Belongs to the EfeM/EfeO family.

It localises to the cell membrane. This Staphylococcus aureus (strain MSSA476) protein is Efem/EfeO family lipoprotein.